A 1214-amino-acid polypeptide reads, in one-letter code: Protein charlatan (1214 aa).

Disordered stretches follow at residues 1-20 (MATL…QSSN), 213-238 (HVNQ…RQEH), and 250-284 (SANA…GGRK). The span at 258–276 (AQSTPTSAPSNSSGGSTSS) shows a compositional bias: low complexity. 2 C2H2-type zinc fingers span residues 305–327 (YACT…ENIH) and 333–356 (FQCY…LRMH). Disordered regions lie at residues 367–397 (RRHV…NVTI) and 463–488 (PVAS…SGLL). Positions 473-485 (GSHGGNGNGGSGS) are enriched in gly residues. 2 C2H2-type zinc fingers span residues 496 to 518 (FTCC…LNTH) and 522 to 545 (FVCL…LKVH). Disordered stretches follow at residues 741-790 (SASS…ATSP), 848-946 (NDED…SGPS), and 1062-1084 (LSTP…SNAS). Composition is skewed to low complexity over residues 855 to 871 (QQHQ…QQQQ), 885 to 896 (NNNNNNNSNNNN), 923 to 946 (SPGT…SGPS), and 1071 to 1084 (KAAP…SNAS).

In terms of tissue distribution, expressed in the PNS and CNS. In early blastoderm stages, it is ubiquitously expressed, then, before stage 5, it disappears from the poles of the embryo and faint stripes are visible. At stage 5, it also accumulates in the dorsal region, cephalic furrow ectodermal patches between the tracheal pits, where neurons of the PNS appear. In older embryos (stage 15) a strong expression is mostly restricted to the central nervous system (CNS) and PNS. In PNS, the pattern suggests that expression occur in many of the neurons of the ventral, lateral and dorsal clusters of neurons. In third instar wing disks, it is expressed in rows of cells on either side of the prospective anterior wing margin and in groups of cells that coincide with proneural clusters of ac/sc expression. Also expressed independently of ac/sc in certain areas of the disk, such as the postnotum and posterior dorsal proximal wing. Expressed in the proneural clusters of the leg disks and in the eye/antenna disk.

It is found in the nucleus. Probable transcription factor involved in the development of the adult pattern of macrochaetae. Required for accumulation of achaete (ac) and scute (sc) in proneural clusters. Probably acts by binding to the proneural cluster-specific enhancers of the ac/sc complex and increasing enhancer efficiency, thereby acting as a stimulator of ac/sc expression in proneural clusters. Also required for correct development of the embryonic/larval peripheral nervous system (PNS). The chain is Protein charlatan (chn) from Drosophila melanogaster (Fruit fly).